Reading from the N-terminus, the 364-residue chain is Threonine-phosphate decarboxylase (364 aa).

O-phospho-L-threonine-binding positions include 8–9 (HG), Asn32, and Asn157. At Lys216 the chain carries N6-(pyridoxal phosphate)lysine. O-phospho-L-threonine contacts are provided by Arg323 and Arg337.

It belongs to the class-II pyridoxal-phosphate-dependent aminotransferase family. In terms of assembly, homodimer. Requires pyridoxal 5'-phosphate as cofactor.

It carries out the reaction O-phospho-L-threonine + H(+) = (R)-1-aminopropan-2-yl phosphate + CO2. Its pathway is cofactor biosynthesis; adenosylcobalamin biosynthesis. In terms of biological role, decarboxylates L-threonine-O-3-phosphate to yield (R)-1-amino-2-propanol O-2-phosphate, the precursor for the linkage between the nucleotide loop and the corrin ring in cobalamin. This chain is Threonine-phosphate decarboxylase (cobD), found in Salmonella typhimurium (strain LT2 / SGSC1412 / ATCC 700720).